Consider the following 278-residue polypeptide: Mediator of RNA polymerase II transcription subunit 4 (278 aa).

Residues 57-88 adopt a coiled-coil conformation; sequence HARILTLRAQVEALEEQKKSSVTALATLRHEL. Disordered stretches follow at residues 120-181 and 240-278; these read VPPT…EEEE and VEAPPEPEPVAEPVQAQAPRPARPAQPQATFDMFDDLDD. Basic and acidic residues-rich tracts occupy residues 124–142 and 160–172; these read YRERAPEAASDKDRDKDDA and DAPKDRDNADNKP. Over residues 250 to 268 the composition is skewed to low complexity; that stretch reads AEPVQAQAPRPARPAQPQA.

Belongs to the Mediator complex subunit 4 family. In terms of assembly, component of the Mediator complex.

It is found in the nucleus. In terms of biological role, component of the Mediator complex, a coactivator involved in the regulated transcription of nearly all RNA polymerase II-dependent genes. Mediator functions as a bridge to convey information from gene-specific regulatory proteins to the basal RNA polymerase II transcription machinery. Mediator is recruited to promoters by direct interactions with regulatory proteins and serves as a scaffold for the assembly of a functional preinitiation complex with RNA polymerase II and the general transcription factors. This Phaeosphaeria nodorum (strain SN15 / ATCC MYA-4574 / FGSC 10173) (Glume blotch fungus) protein is Mediator of RNA polymerase II transcription subunit 4 (MED4).